The primary structure comprises 635 residues: Probable clathrin assembly protein At4g32285 (635 aa).

Residues 23-159 (VASNMAPDLE…ELALFERRGR (137 aa)) form the ENTH domain. The tract at residues 157-208 (RGRNGGGSSSSHQSNGDDGYNRSRDDFRSPPPRTYDYETGNGFGMPKRSRSF) is disordered. The segment covering 165–174 (SSSHQSNGDD) has biased composition (low complexity). Residues 175–184 (GYNRSRDDFR) are compositionally biased toward basic and acidic residues. S207 is modified (phosphoserine). T224 bears the Phosphothreonine mark. The span at 357–369 (AKRAKSPERKEIE) shows a compositional bias: basic and acidic residues. Positions 357–412 (AKRAKSPERKEIEAPPAPAPPVEEPVDMNEIKALPPPENHTPPPPPAPEPKPQQPQ) are disordered. Residues 390-409 (LPPPENHTPPPPPAPEPKPQ) show a composition bias toward pro residues.

The protein localises to the membrane. It localises to the clathrin-coated pit. The protein resides in the golgi apparatus. It is found in the cytoplasmic vesicle. Its subcellular location is the clathrin-coated vesicle. The sequence is that of Probable clathrin assembly protein At4g32285 from Arabidopsis thaliana (Mouse-ear cress).